The chain runs to 272 residues: Regulatory protein RecX (272 aa).

The protein belongs to the RecX family.

The protein resides in the cytoplasm. Its function is as follows. Modulates RecA activity. The polypeptide is Regulatory protein RecX (Staphylococcus aureus (strain Newman)).